We begin with the raw amino-acid sequence, 237 residues long: Probable Bax inhibitor 1 (237 aa).

At 1-29 the chain is on the cytoplasmic side; that stretch reads MNVFDRNINFDSLFKFSQISHSTQVHLKN. The helical transmembrane segment at 30-50 threads the bilayer; that stretch reads VYSSLAVCMFVAAAGSYVHVV. Topologically, residues 51 to 52 are lumenal; sequence TR. The chain crosses the membrane as a helical span at residues 53-73; it reads LFQGGMLSVLGSLGMMFWLAM. Topologically, residues 74–86 are cytoplasmic; the sequence is TPHNSETEKKRLA. A helical transmembrane segment spans residues 87 to 107; the sequence is ILAGFAFLTGVGLCPTLDFVI. Residues 108–112 are Lumenal-facing; sequence AINPS. The helical transmembrane segment at 113–133 threads the bilayer; it reads IIVTAFLGTSVIFVCFTLSAL. Over 134 to 139 the chain is Cytoplasmic; sequence YAKRRS. The chain crosses the membrane as a helical span at residues 140–160; sequence YLFLGGTLMSGLSILFLMSMM. Residues 161 to 166 are Lumenal-facing; it reads NMFFGS. A helical membrane pass occupies residues 167–187; the sequence is VMLFKAHMYLGLLIMCGFVLX. Residues 188–206 are Cytoplasmic-facing; the sequence is DTQLIIEKAENGDKDYVWH. An intramembrane region (helical) is located at residues 207–227; sequence SVDLFLDFITIFRKLMVILAL. The Cytoplasmic portion of the chain corresponds to 228–237; the sequence is NDKDKKKEKK.

The protein belongs to the BI1 family. As to expression, highly abundant in testis.

The protein localises to the endoplasmic reticulum membrane. Suppressor of apoptosis. Modulates unfolded protein response signaling. Modulate ER calcium homeostasis by acting as a calcium-leak channel. The polypeptide is Probable Bax inhibitor 1 (tmbim6) (Paralichthys olivaceus (Bastard halibut)).